The sequence spans 403 residues: Soluble calcium-activated nucleotidase 1 (403 aa).

Topologically, residues methionine 1–arginine 44 are cytoplasmic. The chain crosses the membrane as a helical; Signal-anchor for type II membrane protein span at residues valine 45–serine 61. Residues histidine 62 to isoleucine 403 lie on the Lumenal side of the membrane. N-linked (GlcNAc...) asparagine glycosylation occurs at asparagine 90. Serine 170, aspartate 171, glutamate 217, glutamate 286, serine 347, and glutamate 398 together coordinate Ca(2+).

It belongs to the apyrase family. Monomer. Homodimer; dimerization is Ca(2+)-dependent. It depends on Ca(2+) as a cofactor.

The protein resides in the endoplasmic reticulum membrane. It is found in the golgi apparatus. Its subcellular location is the golgi stack membrane. It catalyses the reaction a ribonucleoside 5'-diphosphate + H2O = a ribonucleoside 5'-phosphate + phosphate + H(+). Its function is as follows. Calcium-dependent nucleotidase with a preference for UDP. The order of activity with different substrates is UDP &gt; GDP &gt; IDP &gt;&gt; UTP &gt; CDP = GTP = ITP. Has very low activity towards ADP and even lower activity towards ATP. Does not hydrolyze AMP and GMP. Involved in proteoglycan synthesis. In Mus musculus (Mouse), this protein is Soluble calcium-activated nucleotidase 1 (Cant1).